A 302-amino-acid polypeptide reads, in one-letter code: Pyridoxal 5'-phosphate synthase subunit PdxS (302 aa).

Position 32 (aspartate 32) interacts with D-ribose 5-phosphate. Catalysis depends on lysine 89, which acts as the Schiff-base intermediate with D-ribose 5-phosphate. Residue glycine 161 coordinates D-ribose 5-phosphate. Position 173 (arginine 173) interacts with D-glyceraldehyde 3-phosphate. D-ribose 5-phosphate-binding positions include glycine 222 and 243-244 (GS). Positions 276 to 302 (ASNPGKGMKGEANADLSEGEKLQTRGV) are disordered. Residues 293–302 (EGEKLQTRGV) show a composition bias toward basic and acidic residues.

Belongs to the PdxS/SNZ family. In terms of assembly, in the presence of PdxT, forms a dodecamer of heterodimers.

The enzyme catalyses aldehydo-D-ribose 5-phosphate + D-glyceraldehyde 3-phosphate + L-glutamine = pyridoxal 5'-phosphate + L-glutamate + phosphate + 3 H2O + H(+). Its pathway is cofactor biosynthesis; pyridoxal 5'-phosphate biosynthesis. In terms of biological role, catalyzes the formation of pyridoxal 5'-phosphate from ribose 5-phosphate (RBP), glyceraldehyde 3-phosphate (G3P) and ammonia. The ammonia is provided by the PdxT subunit. Can also use ribulose 5-phosphate and dihydroxyacetone phosphate as substrates, resulting from enzyme-catalyzed isomerization of RBP and G3P, respectively. This is Pyridoxal 5'-phosphate synthase subunit PdxS from Haloquadratum walsbyi (strain DSM 16790 / HBSQ001).